The following is a 406-amino-acid chain: Tryptophan synthase beta chain (406 aa).

Position 99 is an N6-(pyridoxal phosphate)lysine (Lys99).

This sequence belongs to the TrpB family. In terms of assembly, tetramer of two alpha and two beta chains. The cofactor is pyridoxal 5'-phosphate.

It carries out the reaction (1S,2R)-1-C-(indol-3-yl)glycerol 3-phosphate + L-serine = D-glyceraldehyde 3-phosphate + L-tryptophan + H2O. It functions in the pathway amino-acid biosynthesis; L-tryptophan biosynthesis; L-tryptophan from chorismate: step 5/5. Functionally, the beta subunit is responsible for the synthesis of L-tryptophan from indole and L-serine. This is Tryptophan synthase beta chain from Phenylobacterium zucineum (strain HLK1).